A 130-amino-acid polypeptide reads, in one-letter code: Small ribosomal subunit protein uS11 (130 aa).

It belongs to the universal ribosomal protein uS11 family. Part of the 30S ribosomal subunit. Interacts with proteins S7 and S18. Binds to IF-3.

Functionally, located on the platform of the 30S subunit, it bridges several disparate RNA helices of the 16S rRNA. Forms part of the Shine-Dalgarno cleft in the 70S ribosome. The polypeptide is Small ribosomal subunit protein uS11 (Synechococcus sp. (strain CC9902)).